The primary structure comprises 277 residues: Release factor glutamine methyltransferase (277 aa).

S-adenosyl-L-methionine contacts are provided by residues 117–121 (GTGTG), D140, W168, and N183. 183-186 (NPPY) is a binding site for substrate.

This sequence belongs to the protein N5-glutamine methyltransferase family. PrmC subfamily.

It carries out the reaction L-glutaminyl-[peptide chain release factor] + S-adenosyl-L-methionine = N(5)-methyl-L-glutaminyl-[peptide chain release factor] + S-adenosyl-L-homocysteine + H(+). Methylates the class 1 translation termination release factors RF1/PrfA and RF2/PrfB on the glutamine residue of the universally conserved GGQ motif. The sequence is that of Release factor glutamine methyltransferase from Shigella dysenteriae serotype 1 (strain Sd197).